We begin with the raw amino-acid sequence, 681 residues long: Peroxisomal acyl-coenzyme A oxidase 2 (681 aa).

2 positions are modified to phosphoserine: S3 and S9. K66, K137, K303, K453, K561, and K667 each carry N6-succinyllysine. Residues H679–M681 carry the Microbody targeting signal motif.

This sequence belongs to the acyl-CoA oxidase family. In terms of assembly, homodimer. FAD serves as cofactor. As to expression, most abundant in liver. Also expressed in kidney. Not present in any other tissues tested.

The protein resides in the peroxisome. It carries out the reaction (25R)-3alpha,7alpha,12alpha-trihydroxy-5beta-cholestan-26-oyl-CoA + A + H2O = (24R,25R)-3alpha,7alpha,12alpha,24-tetrahydroxy-5beta-cholestan-26-oyl-CoA + AH2. The enzyme catalyses (25S)-3alpha,7alpha,12alpha-trihydroxy-5beta-cholestan-26-oyl-CoA + O2 = (24E)-3alpha,7alpha,12alpha-trihydroxy-5beta-cholest-24-en-26-oyl-CoA + H2O2. Oxidizes the CoA esters of the bile acid intermediates di- and tri-hydroxycoprostanic acids. Capable of oxidizing short as well as long chain 2-methyl branched fatty acids. This chain is Peroxisomal acyl-coenzyme A oxidase 2, found in Rattus norvegicus (Rat).